The primary structure comprises 341 residues: Glycerol-3-phosphate dehydrogenase [NAD(P)+] (341 aa).

Residues Ser12, Trp13, Arg33, and Lys107 each contribute to the NADPH site. Lys107, Gly134, and Thr136 together coordinate sn-glycerol 3-phosphate. Ala138 provides a ligand contact to NADPH. Residues Lys189, Asp242, Ser252, Arg253, and Asn254 each coordinate sn-glycerol 3-phosphate. The Proton acceptor role is filled by Lys189. Residue Arg253 participates in NADPH binding. Positions 277 and 279 each coordinate NADPH.

The protein belongs to the NAD-dependent glycerol-3-phosphate dehydrogenase family.

It is found in the cytoplasm. The enzyme catalyses sn-glycerol 3-phosphate + NAD(+) = dihydroxyacetone phosphate + NADH + H(+). It catalyses the reaction sn-glycerol 3-phosphate + NADP(+) = dihydroxyacetone phosphate + NADPH + H(+). The protein operates within membrane lipid metabolism; glycerophospholipid metabolism. Catalyzes the reduction of the glycolytic intermediate dihydroxyacetone phosphate (DHAP) to sn-glycerol 3-phosphate (G3P), the key precursor for phospholipid synthesis. The chain is Glycerol-3-phosphate dehydrogenase [NAD(P)+] from Halothermothrix orenii (strain H 168 / OCM 544 / DSM 9562).